The primary structure comprises 472 residues: Bifunctional protein HldE (472 aa).

Residues 1–315 (MAKRVKILVV…QLLNSSFGAN (315 aa)) form a ribokinase region. 192–195 (NKKE) is a binding site for ATP. Asp260 is a catalytic residue. Residues 340–472 (FTNGCFDILH…IKDAKNDDKK (133 aa)) form a cytidylyltransferase region.

This sequence in the N-terminal section; belongs to the carbohydrate kinase PfkB family. The protein in the C-terminal section; belongs to the cytidylyltransferase family. As to quaternary structure, homodimer.

It carries out the reaction D-glycero-beta-D-manno-heptose 7-phosphate + ATP = D-glycero-beta-D-manno-heptose 1,7-bisphosphate + ADP + H(+). The catalysed reaction is D-glycero-beta-D-manno-heptose 1-phosphate + ATP + H(+) = ADP-D-glycero-beta-D-manno-heptose + diphosphate. It functions in the pathway nucleotide-sugar biosynthesis; ADP-L-glycero-beta-D-manno-heptose biosynthesis; ADP-L-glycero-beta-D-manno-heptose from D-glycero-beta-D-manno-heptose 7-phosphate: step 1/4. Its pathway is nucleotide-sugar biosynthesis; ADP-L-glycero-beta-D-manno-heptose biosynthesis; ADP-L-glycero-beta-D-manno-heptose from D-glycero-beta-D-manno-heptose 7-phosphate: step 3/4. Catalyzes the phosphorylation of D-glycero-D-manno-heptose 7-phosphate at the C-1 position to selectively form D-glycero-beta-D-manno-heptose-1,7-bisphosphate. Its function is as follows. Catalyzes the ADP transfer from ATP to D-glycero-beta-D-manno-heptose 1-phosphate, yielding ADP-D-glycero-beta-D-manno-heptose. This chain is Bifunctional protein HldE, found in Campylobacter concisus (strain 13826).